A 432-amino-acid chain; its full sequence is Glutamate-1-semialdehyde 2,1-aminomutase 1 (432 aa).

K272 is subject to N6-(pyridoxal phosphate)lysine.

Belongs to the class-III pyridoxal-phosphate-dependent aminotransferase family. HemL subfamily. As to quaternary structure, homodimer. Requires pyridoxal 5'-phosphate as cofactor.

It is found in the cytoplasm. It carries out the reaction (S)-4-amino-5-oxopentanoate = 5-aminolevulinate. It participates in porphyrin-containing compound metabolism; protoporphyrin-IX biosynthesis; 5-aminolevulinate from L-glutamyl-tRNA(Glu): step 2/2. This chain is Glutamate-1-semialdehyde 2,1-aminomutase 1, found in Exiguobacterium sibiricum (strain DSM 17290 / CCUG 55495 / CIP 109462 / JCM 13490 / 255-15).